A 190-amino-acid chain; its full sequence is Myophilin (190 aa).

The tract at residues 1–23 (MSNVPPPSGLSYQVKKKLEGKRD) is disordered. Positions 24–130 (KDQENEALEW…RTLFALGRTC (107 aa)) constitute a Calponin-homology (CH) domain. Residues 165 to 189 (VSLQYGSNKGASQAGINMGKQRMIM) form a Calponin-like repeat.

Belongs to the calponin family. Muscle specific.

The chain is Myophilin from Echinococcus granulosus (Hydatid tapeworm).